The chain runs to 466 residues: Ribosome biogenesis protein YTM1 (466 aa).

Residues Ile-8 to Arg-95 form a ubiquitin-like (UBL) domain region. The interval Ser-105–Lys-466 is sufficient for interaction with ERB1 and association with 66S pre-ribosomes. 7 WD repeats span residues Pro-120–Tyr-159, Gly-161–Asp-199, Gly-214–Ile-253, Gly-291–Thr-331, Thr-333–Glu-372, Gly-381–Thr-421, and Lys-431–Lys-466.

It belongs to the WD repeat WDR12/YTM1 family. In terms of assembly, component of the NOP7 complex, composed of ERB1, NOP7 and YTM1. The complex is held together by ERB1, which interacts with NOP7 via its N-terminal domain and with YTM1 via a high-affinity interaction between the seven-bladed beta-propeller domains of the 2 proteins. The NOP7 complex associates with the 66S pre-ribosome. Interacts (via UBL domain) with MDN1 (via VWFA/MIDAS domain).

It localises to the nucleus. The protein localises to the nucleolus. The protein resides in the nucleoplasm. Component of the NOP7 complex, which is required for maturation of the 25S and 5.8S ribosomal RNAs and formation of the 60S ribosome. The polypeptide is Ribosome biogenesis protein YTM1 (Debaryomyces hansenii (strain ATCC 36239 / CBS 767 / BCRC 21394 / JCM 1990 / NBRC 0083 / IGC 2968) (Yeast)).